The following is a 197-amino-acid chain: Scoloptoxin SSD20 (197 aa).

The N-terminal stretch at 1–6 (PPMTTE) is a signal peptide.

In terms of tissue distribution, expressed by the venom gland.

It is found in the secreted. May act as a voltage-gated potassium channel inhibitor. Is highly similar to the subunit beta of SSD14 which, when complexed with subunit alpha, induces platelet aggregation and hemolysis. The sequence is that of Scoloptoxin SSD20 from Scolopendra dehaani (Thai centipede).